We begin with the raw amino-acid sequence, 367 residues long: ELAV-like protein 3 (367 aa).

3 RRM domains span residues 39-117, 125-205, and 284-362; these read TNLI…YARP, ANLY…FANN, and WCIF…FKTS.

Belongs to the RRM elav family. Interacts with MAP1B light chain LC1. Brain specific.

Functionally, RNA-binding protein that binds to AU-rich element (ARE) sequences of target mRNAs, including VEGF mRNA. May also bind poly-A tracts via RRM 3. May be involved in neuronal differentiation and maintenance. Plays a role in the stabilization of GAP43 mRNA and in spatial learning. The polypeptide is ELAV-like protein 3 (ELAVL3) (Homo sapiens (Human)).